Consider the following 121-residue polypeptide: Large ribosomal subunit protein bL21c (121 aa).

The protein belongs to the bacterial ribosomal protein bL21 family. As to quaternary structure, part of the 50S ribosomal subunit.

Its subcellular location is the plastid. It localises to the chloroplast. Functionally, this protein binds to 23S rRNA. This Huperzia lucidula (Shining clubmoss) protein is Large ribosomal subunit protein bL21c.